We begin with the raw amino-acid sequence, 816 residues long: Probable E3 ubiquitin-protein ligase hulA (816 aa).

Residues 1 to 112 (MGSNLPAQPN…QMGGDEMLTR (112 aa)) enclose the C2 domain. Disordered stretches follow at residues 134-238 (NLST…WERR) and 253-353 (RTTT…YFVD). 4 stretches are compositionally biased toward polar residues: residues 151–168 (MQPSTSSGLVPQVSASTP), 177–202 (ADPTASNPSLHPQRVPSTTRPSSTIV), 217–226 (SRTNLSSFED), and 253–270 (RTTTWTRPSNNYNEQTSR). The WW 1 domain maps to 229 to 262 (GRLPAGWERREDNLGRTYYVDHNTRTTTWTRPSN). The span at 279-294 (LERRAHQSRMLPEDRT) shows a compositional bias: basic and acidic residues. The segment covering 295 to 309 (GASSPNLQENQQQAQ) has biased composition (polar residues). Low complexity predominate over residues 310–333 (TPPAGGSASAVSMMATGATTAGTG). WW domains lie at 333–366 (GELPPGWEQRTTPEGRPYFVDHNTRTTTWVDPRR) and 393–426 (GPLPSGWEMRLTNTARVYFVDHNTKTTTWDDPRL). In terms of domain architecture, HECT spans 482-816 (SASDLKKRLM…VEETLGFGQE (335 aa)). Cys784 (glycyl thioester intermediate) is an active-site residue.

Belongs to the RSP5/NEDD4 family. Interacts with creD.

It localises to the cytoplasm. The enzyme catalyses S-ubiquitinyl-[E2 ubiquitin-conjugating enzyme]-L-cysteine + [acceptor protein]-L-lysine = [E2 ubiquitin-conjugating enzyme]-L-cysteine + N(6)-ubiquitinyl-[acceptor protein]-L-lysine.. Its pathway is protein modification; protein ubiquitination. Functionally, E3 ubiquitin-protein ligase which accepts ubiquitin from an E2 ubiquitin-conjugating enzyme in the form of a thioester and then directly transfers the ubiquitin to targeted substrates. Probably involved in the regulatory network controlling carbon source utilization. The sequence is that of Probable E3 ubiquitin-protein ligase hulA (hulA) from Aspergillus oryzae (strain ATCC 42149 / RIB 40) (Yellow koji mold).